We begin with the raw amino-acid sequence, 139 residues long: Trafficking protein particle complex subunit 2-like protein (139 aa).

This sequence belongs to the TRAPP small subunits family. Sedlin subfamily.

It is found in the cytoplasm. The protein localises to the perinuclear region. It localises to the endoplasmic reticulum. The protein resides in the golgi apparatus. May play a role in vesicular transport from endoplasmic reticulum to Golgi. This Taeniopygia guttata (Zebra finch) protein is Trafficking protein particle complex subunit 2-like protein (TRAPPC2L).